The sequence spans 142 residues: Large ribosomal subunit protein uL13 (142 aa).

It belongs to the universal ribosomal protein uL13 family. As to quaternary structure, part of the 50S ribosomal subunit.

In terms of biological role, this protein is one of the early assembly proteins of the 50S ribosomal subunit, although it is not seen to bind rRNA by itself. It is important during the early stages of 50S assembly. The sequence is that of Large ribosomal subunit protein uL13 from Syntrophotalea carbinolica (strain DSM 2380 / NBRC 103641 / GraBd1) (Pelobacter carbinolicus).